Reading from the N-terminus, the 117-residue chain is Large ribosomal subunit protein bL20 (117 aa).

Belongs to the bacterial ribosomal protein bL20 family.

Binds directly to 23S ribosomal RNA and is necessary for the in vitro assembly process of the 50S ribosomal subunit. It is not involved in the protein synthesizing functions of that subunit. This is Large ribosomal subunit protein bL20 from Campylobacter fetus subsp. fetus (strain 82-40).